The sequence spans 287 residues: Protease HtpX (287 aa).

Transmembrane regions (helical) follow at residues 4–24 (IFLLIATNLAVLLVASIVMSI) and 33–53 (GGLLVFAAIFGFGGAFISLAI). A Zn(2+)-binding site is contributed by H139. E140 is a catalytic residue. H143 is a binding site for Zn(2+). 2 helical membrane-spanning segments follow: residues 154 to 174 (LIQGVVNTFVIFAARVVAGII) and 195 to 215 (AVVFVLDMLFGILASIIVAYF). E220 contributes to the Zn(2+) binding site.

Belongs to the peptidase M48B family. Zn(2+) is required as a cofactor.

Its subcellular location is the cell inner membrane. The sequence is that of Protease HtpX from Shewanella putrefaciens (strain CN-32 / ATCC BAA-453).